Reading from the N-terminus, the 325-residue chain is Solute-binding protein Bpro_4736 (325 aa).

The signal sequence occupies residues 1–27 (MKTRTLKVLKPTLALLLAASFSAGALA). Residue 168 to 173 (RISPVY) participates in phenylglyoxylate binding.

The protein belongs to the bacterial solute-binding protein 7 family. As to quaternary structure, the complex is comprised of an extracytoplasmic solute-binding protein and a heteromeric permease formed by two transmembrane proteins.

It is found in the periplasm. Functionally, solute-binding protein that binds phenylglyoxylate (in vitro). Probably part of a tripartite ATP-independent periplasmic (TRAP) transport system that mediates solute transport into the cytoplasm. The chain is Solute-binding protein Bpro_4736 from Polaromonas sp. (strain JS666 / ATCC BAA-500).